Consider the following 223-residue polypeptide: Phosphoribosylformylglycinamidine synthase subunit PurQ (223 aa).

The 221-residue stretch at 3 to 223 (SAVVQLPGLN…FASALDVIAA (221 aa)) folds into the Glutamine amidotransferase type-1 domain. Cys86 functions as the Nucleophile in the catalytic mechanism. Active-site residues include His196 and Glu198.

Part of the FGAM synthase complex composed of 1 PurL, 1 PurQ and 2 PurS subunits.

The protein localises to the cytoplasm. The catalysed reaction is N(2)-formyl-N(1)-(5-phospho-beta-D-ribosyl)glycinamide + L-glutamine + ATP + H2O = 2-formamido-N(1)-(5-O-phospho-beta-D-ribosyl)acetamidine + L-glutamate + ADP + phosphate + H(+). It carries out the reaction L-glutamine + H2O = L-glutamate + NH4(+). Its pathway is purine metabolism; IMP biosynthesis via de novo pathway; 5-amino-1-(5-phospho-D-ribosyl)imidazole from N(2)-formyl-N(1)-(5-phospho-D-ribosyl)glycinamide: step 1/2. Functionally, part of the phosphoribosylformylglycinamidine synthase complex involved in the purines biosynthetic pathway. Catalyzes the ATP-dependent conversion of formylglycinamide ribonucleotide (FGAR) and glutamine to yield formylglycinamidine ribonucleotide (FGAM) and glutamate. The FGAM synthase complex is composed of three subunits. PurQ produces an ammonia molecule by converting glutamine to glutamate. PurL transfers the ammonia molecule to FGAR to form FGAM in an ATP-dependent manner. PurS interacts with PurQ and PurL and is thought to assist in the transfer of the ammonia molecule from PurQ to PurL. The polypeptide is Phosphoribosylformylglycinamidine synthase subunit PurQ (Rhizobium johnstonii (strain DSM 114642 / LMG 32736 / 3841) (Rhizobium leguminosarum bv. viciae)).